The following is a 479-amino-acid chain: Proline--tRNA ligase (479 aa).

Belongs to the class-II aminoacyl-tRNA synthetase family. ProS type 3 subfamily. In terms of assembly, homodimer.

It localises to the cytoplasm. It carries out the reaction tRNA(Pro) + L-proline + ATP = L-prolyl-tRNA(Pro) + AMP + diphosphate. In terms of biological role, catalyzes the attachment of proline to tRNA(Pro) in a two-step reaction: proline is first activated by ATP to form Pro-AMP and then transferred to the acceptor end of tRNA(Pro). The sequence is that of Proline--tRNA ligase from Mesomycoplasma hyopneumoniae (strain 7448) (Mycoplasma hyopneumoniae).